The primary structure comprises 63 residues: Translational regulator CsrA (63 aa).

Belongs to the CsrA/RsmA family. As to quaternary structure, homodimer; the beta-strands of each monomer intercalate to form a hydrophobic core, while the alpha-helices form wings that extend away from the core.

It is found in the cytoplasm. A key translational regulator that binds mRNA to regulate translation initiation and/or mRNA stability. Mediates global changes in gene expression, shifting from rapid growth to stress survival by linking envelope stress, the stringent response and the catabolite repression systems. Usually binds in the 5'-UTR; binding at or near the Shine-Dalgarno sequence prevents ribosome-binding, repressing translation, binding elsewhere in the 5'-UTR can activate translation and/or stabilize the mRNA. Its function is antagonized by small RNA(s). This Alteromonas mediterranea (strain DSM 17117 / CIP 110805 / LMG 28347 / Deep ecotype) protein is Translational regulator CsrA.